The chain runs to 605 residues: Indole-3-acetic acid-amido synthetase GH3.8 (605 aa).

AMP is bound by residues S115, 342–346, Y365, D421, and R440; that span reads MYASS.

This sequence belongs to the IAA-amido conjugating enzyme family. As to expression, expressed in the inner floral organs (lodicules, stamens and carpels) and at lower levels in lemmas and paleas.

In terms of biological role, catalyzes the synthesis of indole-3-acetic acid (IAA)-amino acid conjugates, providing a mechanism for the plant to cope with the presence of excessive free auxin. Produces more IAA-Asp levels than IAA-Ala levels in vitro. May participate in the activation of disease resistance by preventing the accumulation of free IAA, which reduces the expression of a group of auxin-responsive genes encoding expansins that control cell wall loosening and expansion. Contributes to late events in stamen and carpel differentiation, and influences floret fertility. This Oryza sativa subsp. indica (Rice) protein is Indole-3-acetic acid-amido synthetase GH3.8 (GH3.8).